Here is a 62-residue protein sequence, read N- to C-terminus: uncharacterized protein (62 aa).

This is an uncharacterized protein from Escherichia coli.